The following is a 188-amino-acid chain: NAD(P)H-quinone oxidoreductase subunit 6, chloroplastic (188 aa).

The next 5 membrane-spanning stretches (helical) occupy residues glycine 10–asparagine 30, isoleucine 32–valine 52, alanine 61–isoleucine 81, glycine 97–leucine 117, and phenylalanine 153–threonine 173.

Belongs to the complex I subunit 6 family. NDH is composed of at least 16 different subunits, 5 of which are encoded in the nucleus.

The protein resides in the plastid. Its subcellular location is the chloroplast thylakoid membrane. The enzyme catalyses a plastoquinone + NADH + (n+1) H(+)(in) = a plastoquinol + NAD(+) + n H(+)(out). The catalysed reaction is a plastoquinone + NADPH + (n+1) H(+)(in) = a plastoquinol + NADP(+) + n H(+)(out). In terms of biological role, NDH shuttles electrons from NAD(P)H:plastoquinone, via FMN and iron-sulfur (Fe-S) centers, to quinones in the photosynthetic chain and possibly in a chloroplast respiratory chain. The immediate electron acceptor for the enzyme in this species is believed to be plastoquinone. Couples the redox reaction to proton translocation, and thus conserves the redox energy in a proton gradient. The protein is NAD(P)H-quinone oxidoreductase subunit 6, chloroplastic (ndhG) of Psilotum nudum (Whisk fern).